Consider the following 554-residue polypeptide: Formate--tetrahydrofolate ligase (554 aa).

64 to 71 (TPAGEGKS) is a binding site for ATP.

It belongs to the formate--tetrahydrofolate ligase family.

It carries out the reaction (6S)-5,6,7,8-tetrahydrofolate + formate + ATP = (6R)-10-formyltetrahydrofolate + ADP + phosphate. It participates in one-carbon metabolism; tetrahydrofolate interconversion. The chain is Formate--tetrahydrofolate ligase from Leuconostoc citreum (strain KM20).